A 304-amino-acid polypeptide reads, in one-letter code: Dihydroorotate dehydrogenase B (NAD(+)), catalytic subunit (304 aa).

FMN is bound by residues Ser21 and 45–46 (KA). Residues Lys45 and 69–73 (NAIGL) contribute to the substrate site. Residues Asn99 and Asn127 each coordinate FMN. Residue Asn127 coordinates substrate. Residue Cys130 is the Nucleophile of the active site. FMN is bound by residues Lys165 and Ile191. 192–193 (NT) is a substrate binding site. Residues Gly217, 243–244 (GG), and 265–266 (GT) contribute to the FMN site.

This sequence belongs to the dihydroorotate dehydrogenase family. Type 1 subfamily. Heterotetramer of 2 PyrK and 2 PyrD type B subunits. FMN serves as cofactor.

It localises to the cytoplasm. The catalysed reaction is (S)-dihydroorotate + NAD(+) = orotate + NADH + H(+). Its pathway is pyrimidine metabolism; UMP biosynthesis via de novo pathway; orotate from (S)-dihydroorotate (NAD(+) route): step 1/1. Functionally, catalyzes the conversion of dihydroorotate to orotate with NAD(+) as electron acceptor. The sequence is that of Dihydroorotate dehydrogenase B (NAD(+)), catalytic subunit (pyrD) from Listeria monocytogenes serotype 4a (strain HCC23).